The primary structure comprises 807 residues: Glycerol-3-phosphate acyltransferase (807 aa).

Residues 308–313 carry the HXXXXD motif motif; the sequence is CHRSHM.

The protein belongs to the GPAT/DAPAT family.

The protein resides in the cell inner membrane. It carries out the reaction sn-glycerol 3-phosphate + an acyl-CoA = a 1-acyl-sn-glycero-3-phosphate + CoA. Its pathway is phospholipid metabolism; CDP-diacylglycerol biosynthesis; CDP-diacylglycerol from sn-glycerol 3-phosphate: step 1/3. This is Glycerol-3-phosphate acyltransferase from Shewanella frigidimarina (strain NCIMB 400).